The sequence spans 194 residues: Chorion class B protein ERB4 (194 aa).

The signal sequence occupies residues Met1–Ser20. The segment at Cys22 to Ala72 is left arm. A central domain region spans residues Ser73 to Ile128. The tract at residues Asp129–Tyr194 is right arm (Gly-rich tandem repeats).

It belongs to the chorion protein family.

Its function is as follows. This protein is one of many from the eggshell of the silk moth. The chain is Chorion class B protein ERB4 from Bombyx mori (Silk moth).